We begin with the raw amino-acid sequence, 151 residues long: Deoxyuridine 5'-triphosphate nucleotidohydrolase (151 aa).

Substrate-binding positions include 70–72 (RSG), N83, and 87–89 (TID).

This sequence belongs to the dUTPase family. Requires Mg(2+) as cofactor.

It carries out the reaction dUTP + H2O = dUMP + diphosphate + H(+). It participates in pyrimidine metabolism; dUMP biosynthesis; dUMP from dCTP (dUTP route): step 2/2. In terms of biological role, this enzyme is involved in nucleotide metabolism: it produces dUMP, the immediate precursor of thymidine nucleotides and it decreases the intracellular concentration of dUTP so that uracil cannot be incorporated into DNA. This chain is Deoxyuridine 5'-triphosphate nucleotidohydrolase, found in Ruegeria pomeroyi (strain ATCC 700808 / DSM 15171 / DSS-3) (Silicibacter pomeroyi).